Reading from the N-terminus, the 290-residue chain is ATP synthase gamma chain (290 aa).

The protein belongs to the ATPase gamma chain family. As to quaternary structure, F-type ATPases have 2 components, CF(1) - the catalytic core - and CF(0) - the membrane proton channel. CF(1) has five subunits: alpha(3), beta(3), gamma(1), delta(1), epsilon(1). CF(0) has three main subunits: a, b and c.

It is found in the cell membrane. Produces ATP from ADP in the presence of a proton gradient across the membrane. The gamma chain is believed to be important in regulating ATPase activity and the flow of protons through the CF(0) complex. The protein is ATP synthase gamma chain of Chloroflexus aurantiacus (strain ATCC 29366 / DSM 635 / J-10-fl).